Consider the following 196-residue polypeptide: MNNGGKAEKENTPSEANLQEEEVRTLFVSGLPLDIKPRELYLLFRPFKGYEGSLIKLTSKQPVGFVSFDSRSEAEAAKNALNGIRFDPEIPQTLRLEFAKANTKMAKNKLVGTPNPSTPLPNTVPQFIAREPYELTVPALYPSSPEVWAPYPLYPAELAPALPPPAFTYPASLHAQMRWLPPSEATSQGWKSRQFC.

M1 carries the N-acetylmethionine modification. T12 carries the post-translational modification Phosphothreonine. An RRM domain is found at 24-101; the sequence is RTLFVSGLPL…QTLRLEFAKA (78 aa). An interaction with RNA region spans residues 98–105; it reads FAKANTKM. T113 carries the phosphothreonine modification.

As to quaternary structure, homodimer; each protein chain binds one RNA molecule via the external surface of the homodimer. Interacts with RNA binding proteins MBNL1, RBFOX2, RBM4 and RBM14; the interaction allows cooperative assembly of stable cell-specific alternative splicing regulatory complexes. Interacts with SMAD2, SMAD3 and SMAD4; the interactions are direct. Ubiquitously expressed, at various levels depending on the isoform and the tissue. Strongly expressed in the heart, prostate, small intestine, large intestine, and ovary; moderately expressed in the placenta, lung, liver, kidney, pancreas, and testis; and poorly expressed in the skeletal muscle, spleen, thymus and peripheral leukocytes.

The protein resides in the nucleus. It localises to the cytoplasm. Its subcellular location is the stress granule. The protein localises to the P-body. RNA binding protein that mediates the regulation of pre-mRNA alternative splicing (AS). Acts either as activator (FLNB, HSPG2, LIPA1, MYOCD, PTPRF and PPFIBP1) or repressor (TPM1, ACTN1, ITGA7, PIEZO1, LSM14B, MBNL1 and MBML2) of splicing events on specific pre-mRNA targets. Together with RNA binding proteins RBFOX2 and MBNL1/2, activates a splicing program associated with differentiated contractile vascular smooth muscle cells (SMC) by regulating AS of numerous pre-mRNA involved in actin cytoskeleton and focal adhesion machineries, suggesting a role in promoting a cell differentiated state. Binds to introns, exons and 3'-UTR associated with tandem CAC trinucleotide motifs separated by a variable spacer region, at a minimum as a dimer. The minimal length of RNA required for RBPMS-binding tandem CAC motifs is 15 nt, with spacing ranging from 1 to 9 nt. Can also bind to CA dinucleotide repeats. Mediates repression of TPM1 exon 3 by binding to CAC tandem repeats in the flanking intronic regions, followed by higher-order oligomerization and heterotypic interactions with other splicing regulators including MBNL1 and RBFOX2, which prevents assembly of ATP-dependent splicing complexes. Functionally, acts as a regulator of pre-mRNA alternative splicing (AS). Binds mRNA. Regulates AS of ACTN1, FLNB, although with lower efficiency than isoform A / RBPMSA. Acts as coactivator of SMAD transcriptional activity in a TGFB1-dependent manner, possibly through increased phosphorylation of SMAD2 and SMAD3 at the C-terminal SSXS regions and promotion of the nuclear accumulation of SMAD proteins. The polypeptide is RNA-binding protein with multiple splicing (Homo sapiens (Human)).